The chain runs to 167 residues: Peptide deformylase (167 aa).

Fe cation-binding residues include C91 and H133. E134 is a catalytic residue. Residue H137 participates in Fe cation binding.

Belongs to the polypeptide deformylase family. It depends on Fe(2+) as a cofactor.

The enzyme catalyses N-terminal N-formyl-L-methionyl-[peptide] + H2O = N-terminal L-methionyl-[peptide] + formate. Removes the formyl group from the N-terminal Met of newly synthesized proteins. Requires at least a dipeptide for an efficient rate of reaction. N-terminal L-methionine is a prerequisite for activity but the enzyme has broad specificity at other positions. The polypeptide is Peptide deformylase (Chromobacterium violaceum (strain ATCC 12472 / DSM 30191 / JCM 1249 / CCUG 213 / NBRC 12614 / NCIMB 9131 / NCTC 9757 / MK)).